The chain runs to 784 residues: Ribosome biogenesis protein BOP1 homolog (784 aa).

Residues 1 to 11 are compositionally biased toward basic residues; the sequence is MTKKLALKRKG. The tract at residues 1–159 is disordered; that stretch reads MTKKLALKRK…DSDTSDEEDI (159 aa). Composition is skewed to acidic residues over residues 27–36, 45–54, 62–73, and 84–111; these read SENEEEEEDL, EDSTDDEGID, SEELQFESDEEG, and AEED…EDEE. The segment covering 112 to 123 has biased composition (basic and acidic residues); sequence KDSKSKQADDKP. Residues 124-133 show a composition bias toward low complexity; sequence SSSGAASKKA. Basic and acidic residues predominate over residues 138-148; it reads LSKRDTSKPEY. Positions 149-158 are enriched in acidic residues; the sequence is QDSDTSDEED. WD repeat units follow at residues 445–486, 488–526, 570–612, 615–653, 656–695, 699–738, and 754–784; these read GHTD…RTIE, DEVV…KVLV, THFK…SQIP, KSKG…LVKK, TNSK…KPYQ, LHRN…DLLQ, and RDEF…RLYT.

It belongs to the WD repeat BOP1/ERB1 family.

It localises to the nucleus. It is found in the nucleolus. The protein resides in the nucleoplasm. Required for maturation of ribosomal RNAs and formation of the large ribosomal subunit. The chain is Ribosome biogenesis protein BOP1 homolog from Drosophila yakuba (Fruit fly).